The following is a 340-amino-acid chain: Hydroxyurea phosphotransferase (340 aa).

Asp-240 acts as the Proton acceptor in catalysis.

This sequence belongs to the aminoglycoside phosphotransferase family.

Its function is as follows. Potential phosphotransferase that inactivates hydroxyurea by phosphorylation of the hydroxy group in the hydroxylamine moiety. In Kitasatospora aureofaciens (Streptomyces aureofaciens), this protein is Hydroxyurea phosphotransferase (hur).